We begin with the raw amino-acid sequence, 357 residues long: Ribosomal RNA large subunit methyltransferase M (357 aa).

S-adenosyl-L-methionine is bound by residues S183, 216-219, D235, D255, and D271; that span reads APGG. Catalysis depends on K300, which acts as the Proton acceptor.

This sequence belongs to the class I-like SAM-binding methyltransferase superfamily. RNA methyltransferase RlmE family. RlmM subfamily. Monomer.

It localises to the cytoplasm. The enzyme catalyses cytidine(2498) in 23S rRNA + S-adenosyl-L-methionine = 2'-O-methylcytidine(2498) in 23S rRNA + S-adenosyl-L-homocysteine + H(+). Its function is as follows. Catalyzes the 2'-O-methylation at nucleotide C2498 in 23S rRNA. The polypeptide is Ribosomal RNA large subunit methyltransferase M (Pseudomonas syringae pv. syringae (strain B728a)).